The sequence spans 129 residues: Serum amyloid A protein (129 aa).

Residues 1–18 (MKLFPGLLFCSLVLGVSG) form the signal peptide. Pyrrolidone carboxylic acid is present on Gln-19. Residues 92 to 129 (GDSGHGAEDSKADQAANEWGRSGKDPNHFRPAGLPDKY) are disordered. Residues 112–129 (RSGKDPNHFRPAGLPDKY) constitute a propeptide, often cleaved during amyloidogenesis.

Belongs to the SAA family. Post-translationally, this protein is the precursor of amyloid protein A, which is formed by the removal of residues from the C-terminal end. Expressed by the liver; secreted in plasma.

It localises to the secreted. Major acute phase reactant. Apolipoprotein of the HDL complex. The sequence is that of Serum amyloid A protein (SAA1) from Canis lupus familiaris (Dog).